The primary structure comprises 202 residues: uncharacterized protein (202 aa).

Disordered regions lie at residues 1-32 and 46-95; these read MRPE…ASLG and PSSV…PSYT. Residues 47–79 show a composition bias toward low complexity; it reads SSVSLSSSSSRRSMPSLGSSRSSSLPSTGSLRS.

This is an uncharacterized protein from Equus caballus (Horse).